Consider the following 272-residue polypeptide: Cell division protein FtsQ (272 aa).

The Cytoplasmic segment spans residues 1–20; it reads MSSYAPREIPLDIRLMQGTS. Residues 21 to 40 form a helical membrane-spanning segment; the sequence is RALFWLVALGCLFVAGHWLM. The Periplasmic segment spans residues 41–272; sequence QRNWWDIRAV…KTPQPAGRKD (232 aa). The region spanning 45–114 is the POTRA domain; it reads WDIRAVRLQG…MQLAVTLQAQ (70 aa).

It belongs to the FtsQ/DivIB family. FtsQ subfamily. As to quaternary structure, part of a complex composed of FtsB, FtsL and FtsQ.

It localises to the cell inner membrane. In terms of biological role, essential cell division protein. May link together the upstream cell division proteins, which are predominantly cytoplasmic, with the downstream cell division proteins, which are predominantly periplasmic. May control correct divisome assembly. In Thiomonas arsenitoxydans (strain DSM 22701 / CIP 110005 / 3As), this protein is Cell division protein FtsQ.